The following is a 255-amino-acid chain: Type III pantothenate kinase (255 aa).

Residue 6–13 (DVGNTNTV) coordinates ATP. Substrate-binding positions include Y100 and 107–110 (GADR). D109 acts as the Proton acceptor in catalysis. Position 129 (D129) interacts with K(+). An ATP-binding site is contributed by T132. T184 provides a ligand contact to substrate.

It belongs to the type III pantothenate kinase family. As to quaternary structure, homodimer. NH4(+) serves as cofactor. It depends on K(+) as a cofactor.

The protein resides in the cytoplasm. It catalyses the reaction (R)-pantothenate + ATP = (R)-4'-phosphopantothenate + ADP + H(+). It participates in cofactor biosynthesis; coenzyme A biosynthesis; CoA from (R)-pantothenate: step 1/5. In terms of biological role, catalyzes the phosphorylation of pantothenate (Pan), the first step in CoA biosynthesis. In Syntrophomonas wolfei subsp. wolfei (strain DSM 2245B / Goettingen), this protein is Type III pantothenate kinase.